The chain runs to 212 residues: External core antigen (212 aa).

The first 19 residues, 1-19 (MQLFPLCLIISCSCPTVQA), serve as a signal peptide directing secretion. The segment at 25-27 (GWL) is HBEAG. Residues 165-212 (NAPILSTLPETTVVRRRGRSPRRRTPSPRRRRSQSPRRRRSQSRESQC) form a disordered region. Residues 178 to 205 (VRRRGRSPRRRTPSPRRRRSQSPRRRRS) are compositionally biased toward basic residues. The stretch at 184-190 (SPRRRTP) is one 1; half-length repeat. Positions 184–206 (SPRRRTPSPRRRRSQSPRRRRSQ) are 3 X 8 AA repeats of S-P-R-R-R-R-S-Q. 2 repeat units span residues 191 to 198 (SPRRRRSQ) and 199 to 206 (SPRRRRSQ).

Belongs to the orthohepadnavirus precore antigen family. In terms of assembly, homodimerizes. Phosphorylated. In terms of processing, cleaved by host furin.

It is found in the secreted. The protein resides in the host nucleus. In terms of biological role, may regulate immune response to the intracellular capsid in acting as a T-cell tolerogen, by having an immunoregulatory effect which prevents destruction of infected cells by cytotoxic T-cells. This immune regulation may predispose to chronicity during perinatal infections and prevent severe liver injury during adult infections. The protein is External core antigen of Hepatitis B virus genotype C subtype ayr (isolate Human/Japan/Okamoto/-) (HBV-C).